A 599-amino-acid chain; its full sequence is MLSYLKQNLHSYFSSRVLIFTLATAAIIFACATFYVISLESKNFSTIIGFLLVDLAIFLILGVVLTQKFFTKNNNNDSSKLQNRIVIAFSLVAAIPTIIVSVFSVYFFNLSVQAWFDKKISTVLDQSVIVAESYIAEHKLQLKETALAVAEDLSDMYYDLIHNPALFTKTLNTEAEMRSLDEAIVLNKSTNTIVANSYLSFSLSFATIPAHLIKKADLGELVEVKSDPTKIRMLIKLKEYNDVYLLVGRLVDNKIIDHVDATNGAAAEYNSLKNEIDNIQIKFSIMFIFIALLLLFVAISFGVIFTAKIVKPIKKLVTATDNVKDGDLTVQVPENEVDKDEIGTLYVAFNRMIKQLSRQQRDLVIAQRAMAWSDVAKKVAHEIKNPLTPILLASERLLKKFSPEIKERVEFENYLKMIIRHTNDIKNIVSEFVLFARLPAPKFTKSELVYLVKHIVEARKLLNDHILYKFESNVEQFDFMCDATQINQVMINLLKNAEESIEGRESGKIEVTIDVKDDFISVIVTDNGKGFPPELIGKATESYVTTSSKGMGVGLAIVKRIVEEHCGILDIANREAEGAIIDIKFDLKELDLKAKRLEM.

4 helical membrane-spanning segments follow: residues 17–37, 44–64, 85–105, and 285–305; these read VLIF…FYVI, FSTI…LGVV, IVIA…VFSV, and IMFI…GVIF. The HAMP domain occupies 307–361; it reads AKIVKPIKKLVTATDNVKDGDLTVQVPENEVDKDEIGTLYVAFNRMIKQLSRQQR. Positions 378-589 constitute a Histidine kinase domain; that stretch reads KVAHEIKNPL…IIDIKFDLKE (212 aa). His-381 is subject to Phosphohistidine; by autocatalysis.

The protein resides in the cell membrane. It carries out the reaction ATP + protein L-histidine = ADP + protein N-phospho-L-histidine.. In terms of biological role, member of the two-component regulatory system RC0948/RC0849. This Rickettsia conorii (strain ATCC VR-613 / Malish 7) protein is Putative sensor histidine kinase NtrY-like.